A 246-amino-acid chain; its full sequence is E3 ubiquitin-protein ligase MARCHF2 (246 aa).

An RING-CH-type zinc finger spans residues 56–116; it reads DTPSDGPFCR…ELCHTEFAVE (61 aa). The interval 56-116 is required for inhibition of HIV-1 virus production and VSV G protein expression; the sequence is DTPSDGPFCR…ELCHTEFAVE (61 aa). 8 residues coordinate Zn(2+): C64, C67, C80, C82, H90, C93, C106, and C109. Residues 121–246 form a required for interaction with IKBKG region; the sequence is PLTEWLKDPG…LKKVAEETPV (126 aa). A run of 2 helical transmembrane segments spans residues 138–158 and 175–195; these read LCCDMVCFLFITPLAAISGWL and AVGLIALTIALFTIYVLWTLV.

As to quaternary structure, interacts with STX6; the interaction promotes MARCHF2-mediated ubiquitination and degradation of CFTR. Interacts with MARCHF3. Interacts with GOPC/CAL; the interaction leads to CFTR ubiquitination and degradation. Interacts with CFTR; the interaction leads to CFTR ubiqtuitination and degradation. Interacts (via PDZ domain) with DLG1 (via PDZ domains); the interaction leads to DLG1 ubiqtuitination and degradation. Interacts with ERGIC3. Interacts with ADRB2. Interacts with IKBKG/NEMO; during the late stages of macrophage viral and bacterial infection; the interaction leads to ubiquitination and degradation of IKBKG/NEMO. As to expression, broadly expressed.

The protein localises to the endoplasmic reticulum membrane. The protein resides in the lysosome membrane. It is found in the endosome membrane. Its subcellular location is the golgi apparatus membrane. It localises to the cytoplasm. The protein localises to the cell membrane. The enzyme catalyses S-ubiquitinyl-[E2 ubiquitin-conjugating enzyme]-L-cysteine + [acceptor protein]-L-lysine = [E2 ubiquitin-conjugating enzyme]-L-cysteine + N(6)-ubiquitinyl-[acceptor protein]-L-lysine.. The protein operates within protein modification; protein ubiquitination. Functionally, E3 ubiquitin-protein ligase that may mediate ubiquitination of TFRC and CD86, and promote their subsequent endocytosis and sorting to lysosomes via multivesicular bodies. E3 ubiquitin ligases accept ubiquitin from an E2 ubiquitin-conjugating enzyme in the form of a thioester and then directly transfer the ubiquitin to targeted substrates. Together with GOPC/CAL mediates the ubiquitination and lysosomal degradation of CFTR. Ubiquitinates and therefore mediates the degradation of DLG1. Regulates the intracellular trafficking and secretion of alpha1-antitrypsin/SERPINA1 and HP/haptoglobin via ubiquitination and degradation of the cargo receptor ERGIC3. Negatively regulates the antiviral and antibacterial immune response by repression of the NF-kB and type 1 IFN signaling pathways, via MARCHF2-mediated K48-linked polyubiquitination of IKBKG/NEMO, resulting in its proteasomal degradation. May be involved in endosomal trafficking through interaction with STX6. Its function is as follows. (Microbial infection) Positively regulates the degradation of Vesicular stomatitis virus (VSV) G protein via the lysosomal degradation pathway. Represses HIV-1 viral production and may inhibit the translocation of HIV-1 env to the cell surface, resulting in decreased viral cell-cell transmission. This Homo sapiens (Human) protein is E3 ubiquitin-protein ligase MARCHF2.